A 440-amino-acid chain; its full sequence is Suppressor of cytokine signaling 4 (440 aa).

Residues 1-11 (MAENSESNSKN) show a composition bias toward polar residues. Positions 1–29 (MAENSESNSKNVDVRPKTSRSRSADRKDG) are disordered. Basic and acidic residues predominate over residues 12 to 29 (VDVRPKTSRSRSADRKDG). One can recognise an SH2 domain in the interval 286–381 (CYWGVMDKYA…FFEPLLSTPL (96 aa)). Residues 376 to 425 (LLSTPLIRTFPFSLQHICRTVICNCTTYDGIDALPIPSSMKLYLKEYHYK) enclose the SOCS box domain.

It functions in the pathway protein modification; protein ubiquitination. Its function is as follows. SOCS family proteins form part of a classical negative feedback system that regulates cytokine signal transduction. Substrate-recognition component of a SCF-like ECS (Elongin BC-CUL2/5-SOCS-box protein) E3 ubiquitin-protein ligase complex which mediates the ubiquitination and subsequent proteasomal degradation of target proteins. Inhibits EGF signaling by mediating the degradation of the Tyr-phosphorylated EGF receptor/EGFR. In Bos taurus (Bovine), this protein is Suppressor of cytokine signaling 4 (SOCS4).